An 85-amino-acid chain; its full sequence is Putative sodium channel toxin Ts37 (85 aa).

The first 20 residues, 1 to 20 (MAGEWACLLVSLVLLWGAAG), serve as a signal peptide directing secretion. The region spanning 22-83 (RDGFLLDRNF…KIWGDSVRCR (62 aa)) is the LCN-type CS-alpha/beta domain. Cystine bridges form between Cys-32–Cys-82, Cys-36–Cys-59, Cys-45–Cys-64, and Cys-49–Cys-66.

This sequence belongs to the long (4 C-C) scorpion toxin superfamily. Sodium channel inhibitor family. Expressed by the venom gland.

The protein localises to the secreted. Functionally, putative sodium channel toxin. The protein is Putative sodium channel toxin Ts37 of Tityus serrulatus (Brazilian scorpion).